The chain runs to 564 residues: Major facilitator superfamily transporter MPN_076 (564 aa).

A run of 12 helical transmembrane segments spans residues 1–21 (MLWA…FVID), 65–85 (ITLL…KFGY), 89–109 (VMIM…GDPL), 176–196 (IAGY…GTTL), 220–240 (NLWG…FQSV), 249–269 (VFIL…FAWF), 306–326 (MIGM…GGWW), 358–378 (AGLP…YMVF), 404–424 (IVIV…FAFV), 425–445 (AIAT…ILIL), 457–477 (VSVL…AFDI), and 501–521 (GAIA…AIVV).

This sequence belongs to the major facilitator superfamily.

The protein resides in the cell membrane. The chain is Major facilitator superfamily transporter MPN_076 from Mycoplasma pneumoniae (strain ATCC 29342 / M129 / Subtype 1) (Mycoplasmoides pneumoniae).